Here is a 481-residue protein sequence, read N- to C-terminus: Ankyrin repeat, SAM and basic leucine zipper domain-containing protein 1 (481 aa).

The segment covering 1-16 has biased composition (gly residues); it reads MASGGLRGLAVAGGGE. The interval 1-23 is disordered; sequence MASGGLRGLAVAGGGESSDSEDD. Residues Ser-17, Ser-18, and Ser-20 each carry the phosphoserine modification. ANK repeat units follow at residues 45-74, 78-107, 110-144, 148-177, 181-210, and 214-243; these read EKNETFKKALTTGDISLVQELLDSGISVDS, YGWTPLMYAASIANVELVRVLLDRGANASF, DKQTILITACSARGSEEQILKCVELLLSRNADPNV, RLMTPIMYAARDGHPQVVAVLVAHGAEVNT, NGYTALTWAARQGHKNVVLKLLELGANKML, and DGKIPSEIAKRNKHLEIFNFLSLTLNPLEG. Residues 272–334 enclose the SAM domain; sequence SYTAFGDLEI…KILSALKELE (63 aa).

In terms of assembly, interacts with DDX4, PIWIL1, RANBP9 and TDRD1.

The protein localises to the cytoplasm. Functionally, plays a central role during spermatogenesis by repressing transposable elements and preventing their mobilization, which is essential for the germline integrity. Acts via the piRNA metabolic process, which mediates the repression of transposable elements during meiosis by forming complexes composed of piRNAs and Piwi proteins and governs the methylation and subsequent repression of transposons. Its association with pi-bodies suggests a participation in the primary piRNAs metabolic process. Required prior to the pachytene stage to facilitate the production of multiple types of piRNAs, including those associated with repeats involved in the regulation of retrotransposons. May act by mediating protein-protein interactions during germ cell maturation. This chain is Ankyrin repeat, SAM and basic leucine zipper domain-containing protein 1 (ASZ1), found in Microcebus murinus (Gray mouse lemur).